The following is a 426-amino-acid chain: 3-phosphoshikimate 1-carboxyvinyltransferase (426 aa).

The 3-phosphoshikimate site is built by lysine 22, serine 23, and arginine 27. Lysine 22 lines the phosphoenolpyruvate pocket. The phosphoenolpyruvate site is built by glycine 96 and arginine 124. The 3-phosphoshikimate site is built by serine 170, serine 171, glutamine 172, serine 198, aspartate 314, asparagine 337, and lysine 341. Glutamine 172 provides a ligand contact to phosphoenolpyruvate. The active-site Proton acceptor is aspartate 314. Phosphoenolpyruvate-binding residues include arginine 345, arginine 387, and lysine 412.

It belongs to the EPSP synthase family. Monomer.

The protein localises to the cytoplasm. The enzyme catalyses 3-phosphoshikimate + phosphoenolpyruvate = 5-O-(1-carboxyvinyl)-3-phosphoshikimate + phosphate. The protein operates within metabolic intermediate biosynthesis; chorismate biosynthesis; chorismate from D-erythrose 4-phosphate and phosphoenolpyruvate: step 6/7. In terms of biological role, catalyzes the transfer of the enolpyruvyl moiety of phosphoenolpyruvate (PEP) to the 5-hydroxyl of shikimate-3-phosphate (S3P) to produce enolpyruvyl shikimate-3-phosphate and inorganic phosphate. The polypeptide is 3-phosphoshikimate 1-carboxyvinyltransferase (Shewanella sediminis (strain HAW-EB3)).